The primary structure comprises 653 residues: Phospholipid-transporting ATPase VD (653 aa).

At 1 to 375 (MACNLCYEAE…GHWCYTRLSN (375 aa)) the chain is on the cytoplasmic side. ATP is bound by residues Glu14, Phe56, Lys80, Arg124, Thr204, Gly205, Asp206, 259 to 266 (GLIITGKT), Arg293, and Lys299. Asp319 is a Mg(2+) binding site. 2 residues coordinate ATP: Asn322 and Asp323. Asp323 is a binding site for Mg(2+). The helical transmembrane segment at 376-396 (MILYFFYKNVAYVNLLFWYQF) threads the bilayer. The Exoplasmic loop segment spans residues 397–407 (FCGFSGTSMTD). A helical membrane pass occupies residues 408–428 (YWVLIFFNLLFTSAPPVIYGV). Residues 429–458 (LEKDVSAETLMQLPELYKSGQKSEAYLPHT) lie on the Cytoplasmic side of the membrane. The helical transmembrane segment at 459–480 (FWITLLDAFYQSLVCFFVPYFT) threads the bilayer. Over 481-487 (YQGSDID) the chain is Exoplasmic loop. The helical transmembrane segment at 488–510 (IFAFGNPLNTAALFIILLHLIIE) threads the bilayer. Over 511-516 (SKSLTW) the chain is Cytoplasmic. Residues 517–537 (IHMLVITGSILSYFLFAIVFG) form a helical membrane-spanning segment. Residues 538–555 (AMCVTCNPPSNPYWIMQE) are Exoplasmic loop-facing. The chain crosses the membrane as a helical span at residues 556–580 (HVLDPVFYLVCILTTCIALLPRFVY). Over 581-653 (RGAGKMNQVT…AFEMARPCKD (73 aa)) the chain is Cytoplasmic.

The protein belongs to the cation transport ATPase (P-type) (TC 3.A.3) family. Type IV subfamily. As to quaternary structure, component of a P4-ATPase flippase complex which consists of a catalytic alpha subunit ATP10A and an accessory beta subunit TMEM30A. It depends on Mg(2+) as a cofactor. Post-translationally, autophosphorylated at the conserved aspartate of the P-type ATPase signature sequence.

Its subcellular location is the cell membrane. It is found in the endoplasmic reticulum membrane. The catalysed reaction is ATP + H2O + phospholipidSide 1 = ADP + phosphate + phospholipidSide 2.. It carries out the reaction a beta-D-glucosyl-(1&lt;-&gt;1')-N-acylsphing-4-enine(out) + ATP + H2O = a beta-D-glucosyl-(1&lt;-&gt;1')-N-acylsphing-4-enine(in) + ADP + phosphate + H(+). In terms of biological role, catalytic component of a P4-ATPase flippase complex, which catalyzes the hydrolysis of ATP coupled to the transport of glucosylceramide (GlcCer) from the outer to the inner leaflet of the plasma membrane. This Macaca fascicularis (Crab-eating macaque) protein is Phospholipid-transporting ATPase VD (ATP10D).